The primary structure comprises 1041 residues: Isoleucine--tRNA ligase (1041 aa).

The 'HIGH' region signature appears at 53-63; sequence PFANGLPHYGH. The 'KMSKS' region motif lies at 619–623; it reads KMSKS. Lys622 contributes to the ATP binding site.

Belongs to the class-I aminoacyl-tRNA synthetase family. IleS type 2 subfamily. As to quaternary structure, monomer. The cofactor is Zn(2+).

The protein localises to the cytoplasm. The enzyme catalyses tRNA(Ile) + L-isoleucine + ATP = L-isoleucyl-tRNA(Ile) + AMP + diphosphate. Functionally, catalyzes the attachment of isoleucine to tRNA(Ile). As IleRS can inadvertently accommodate and process structurally similar amino acids such as valine, to avoid such errors it has two additional distinct tRNA(Ile)-dependent editing activities. One activity is designated as 'pretransfer' editing and involves the hydrolysis of activated Val-AMP. The other activity is designated 'posttransfer' editing and involves deacylation of mischarged Val-tRNA(Ile). The polypeptide is Isoleucine--tRNA ligase (ileS) (Mycobacterium tuberculosis (strain CDC 1551 / Oshkosh)).